Reading from the N-terminus, the 95-residue chain is uncharacterized protein (95 aa).

Residues 1–19 (MAILMLSLQLILLLIPSIS) form the signal peptide. 2 N-linked (GlcNAc...) asparagine glycosylation sites follow: Asn-38 and Asn-41.

The protein resides in the secreted. This is an uncharacterized protein from Homo sapiens (Human).